The primary structure comprises 882 residues: Formin-like protein 9 (882 aa).

Positions 1–19 (MGMAMRCVLVLFSVSPVLL) are cleaved as a signal peptide. Positions 67-92 (SRGRRHKRYSEAPAPAPAPVPAHQAR) are disordered. The chain crosses the membrane as a helical span at residues 138–158 (IVALGVVGLCLVVLGVVIAAF). Disordered stretches follow at residues 178–202 (RHGSRDQRSPAATRKVSSHPSPDPL), 293–316 (THDSPSDSSYQSLSPDCTSRLSPK), and 401–471 (TMTN…PLPR). The span at 298-308 (SDSSYQSLSPD) shows a compositional bias: low complexity. A compositionally biased stretch (pro residues) spans 427-441 (KPAPPPPPQKNPPPN). The region spanning 462–882 (VGKDGSPLPR…QTLNLVLPLK (421 aa)) is the FH2 domain.

The protein belongs to the formin-like family. Class-I subfamily.

It localises to the membrane. The sequence is that of Formin-like protein 9 (FH9) from Oryza sativa subsp. japonica (Rice).